The following is a 349-amino-acid chain: tRNA uridine(34) hydroxylase (349 aa).

Residues 146 to 240 form the Rhodanese domain; the sequence is DDPDAVFIDM…YARKAREQGL (95 aa). Residue C200 is the Cysteine persulfide intermediate of the active site. Over residues 314–328 the composition is skewed to basic and acidic residues; that stretch reads PEEEQRRRRAGRENG. Residues 314 to 349 are disordered; it reads PEEEQRRRRAGRENGNKIFNKSRGRLNTTLGIPDPE.

Belongs to the TrhO family.

It carries out the reaction uridine(34) in tRNA + AH2 + O2 = 5-hydroxyuridine(34) in tRNA + A + H2O. Catalyzes oxygen-dependent 5-hydroxyuridine (ho5U) modification at position 34 in tRNAs. The protein is tRNA uridine(34) hydroxylase of Cronobacter sakazakii (strain ATCC BAA-894) (Enterobacter sakazakii).